The chain runs to 466 residues: MSLSTHYHAHKPNVPIIMEDVFGWVREGNAFQVRVWLDDHEHDLNVGDDHAFSLLHWAAKGGHVAIAEMLLSRGARVNSTNMGDDTSLHLAAAHGHRQIVVKLLSRKADVNATNEHGMTPLHYACFWGYEQIAEDLISCGAAVNVCNKKGMTPLDVCQPMCKNTILEIAQEHGQSPNDRVPFKDTTWKGTKSRTRDATLSRYTGVDVSSLNLITKIAESHSGELWRGKWQGNDIVARILNVQEVTARISRDFQTEFPALRIFAHPNICAVLAAANQPPNLVIISQYMPFGSLYNVLHEQSSVVIDHGQAVRFALDIARGMSYLHSLDPMLLRFYLSSKHVVVDEELTAKLSMADTKFSFQEVGKAYSPAWMSPEALSRAPEDLNIRAADMWSFAILLWELNTREVPFSDLPPMECGMKIALEGLRVHIPPGIARNMNRLMNICMNEDPGRRPNFDQIIPILERMIL.

ANK repeat units follow at residues 50–79 (HAFS…RVNS), 83–112 (GDDT…DVNA), and 116–145 (HGMT…AVNV). The region spanning 210–465 (LNLITKIAES…QIIPILERMI (256 aa)) is the Protein kinase domain.

The protein belongs to the protein kinase superfamily. TKL Ser/Thr protein kinase family. In terms of assembly, interacts (via protein kinase domain) with unc-112 (via N-terminus). Interacts (via ANK repeats) with unc-97 (via first LIM domain). Interacts (via protein kinase domain) with pat-6 (via C-terminus CH domain). May form a complex with unc-112, unc-97 and pat-6. Does not interact with integrin pat-3. Component of an integrin containing attachment complex, composed of at least pat-2, pat-3, pat-4, pat-6, unc-52, unc-97 and unc-112. Expressed in body wall muscle.

The protein resides in the cytoplasm. Its subcellular location is the myofibril. It localises to the sarcomere. The protein localises to the m line. It is found in the basal cell membrane. Probable pseudokinase that acts as an adapter protein. Component of an integrin containing attachment complex, which is required for muscle development and maintenance. Involved in the assembly of dense bodies and M lines during body wall muscle development by recruiting several of their components including integrin pat-3, cpna-1, unc-89 and unc-112 to integrin-mediated attachment sites. Plays a role in distal tip cell (DTC) migration and in oocyte development probably by regulating the actin cytoskeleton. During the formation of neuromuscular junctions at the larval stage, negatively regulates membrane protrusion from body wall muscles. May be involved in thermotolerance and lifespan. The chain is Integrin-linked protein kinase homolog pat-4 from Caenorhabditis elegans.